Reading from the N-terminus, the 164-residue chain is Peptide deformylase (164 aa).

Residues C87 and H129 each contribute to the Fe cation site. E130 is a catalytic residue. H133 provides a ligand contact to Fe cation.

It belongs to the polypeptide deformylase family. Requires Fe(2+) as cofactor.

It carries out the reaction N-terminal N-formyl-L-methionyl-[peptide] + H2O = N-terminal L-methionyl-[peptide] + formate. Functionally, removes the formyl group from the N-terminal Met of newly synthesized proteins. Requires at least a dipeptide for an efficient rate of reaction. N-terminal L-methionine is a prerequisite for activity but the enzyme has broad specificity at other positions. This is Peptide deformylase from Thermotoga neapolitana (strain ATCC 49049 / DSM 4359 / NBRC 107923 / NS-E).